The following is a 137-amino-acid chain: uncharacterized protein (137 aa).

The HTH merR-type domain maps to Met-4–Leu-73. Positions Ser-8–Ile-27 form a DNA-binding region, H-T-H motif.

This is an uncharacterized protein from Synechocystis sp. (strain ATCC 27184 / PCC 6803 / Kazusa).